Here is a 124-residue protein sequence, read N- to C-terminus: Small ribosomal subunit protein uS12 (124 aa).

Residues M1–G32 are disordered. The segment covering R9–K18 has biased composition (basic residues). D89 carries the 3-methylthioaspartic acid modification.

It belongs to the universal ribosomal protein uS12 family. Part of the 30S ribosomal subunit. Contacts proteins S8 and S17. May interact with IF1 in the 30S initiation complex.

With S4 and S5 plays an important role in translational accuracy. In terms of biological role, interacts with and stabilizes bases of the 16S rRNA that are involved in tRNA selection in the A site and with the mRNA backbone. Located at the interface of the 30S and 50S subunits, it traverses the body of the 30S subunit contacting proteins on the other side and probably holding the rRNA structure together. The combined cluster of proteins S8, S12 and S17 appears to hold together the shoulder and platform of the 30S subunit. The protein is Small ribosomal subunit protein uS12 of Acidothermus cellulolyticus (strain ATCC 43068 / DSM 8971 / 11B).